The following is a 707-amino-acid chain: Serine/threonine protein kinase UL97 (707 aa).

The segment covering Met-1–Leu-14 has biased composition (low complexity). 4 disordered regions span residues Met-1–Arg-33, Asp-113–Tyr-146, Phe-176–Arg-198, and Glu-231–Ser-264. Positions Asp-113–Arg-127 are enriched in basic and acidic residues. Low complexity predominate over residues Gly-178–Gly-188. ATP is bound by residues Leu-337–Val-345 and Lys-359. Asp-456 acts as the Proton acceptor in catalysis.

It belongs to the protein kinase superfamily. Tyr protein kinase family. HCMV ganciclovir subfamily. In terms of assembly, interacts with UL83. In terms of processing, autophosphorylates on serine and threonine residues.

It is found in the virion. The enzyme catalyses L-seryl-[protein] + ATP = O-phospho-L-seryl-[protein] + ADP + H(+). It carries out the reaction L-threonyl-[protein] + ATP = O-phospho-L-threonyl-[protein] + ADP + H(+). In terms of biological role, serine/threonine protein kinase that plays important roles in several processes including nuclear viral egress, viral replication or regulation of host cell cycle progression. Participates in the acquisition of tegument during virion morphogenesis in the nucleus. Phosphorylates the viral nuclear egress complex (NEC) subunits UL50 and UL53. Redistributes the host nuclear lamina by phosphorylating cellular Lamins-A/C. Plays a role in viral DNA synthesis by phosphorylating the DNA polymerase processivity factor UL44. Stimulates host cell cycle to support viral DNA synthesis by phosphorylating host retinoblastoma/RB1 protein. Additional substrates have been identified including host EF1D or H2B. Also phosphorylates host SAMHD1 and thereby counteracts its antiviral effect by reducing its dNTP hydrolase activity. The sequence is that of Serine/threonine protein kinase UL97 (UL97) from Human cytomegalovirus (strain AD169) (HHV-5).